The primary structure comprises 84 residues: Anaphase-promoting complex subunit 11 (84 aa).

Positions 23, 26, 34, 37, 44, 51, 53, 56, 58, 59, 73, and 76 each coordinate Zn(2+). An RING-type zinc finger spans residues 34–77; it reads CPDCKVPGDDCPLVWGQCSHCFHMHCILKWLNAQQVQQHCPMCR.

Belongs to the RING-box family. In terms of assembly, the mammalian APC/C is composed at least of 14 distinct subunits ANAPC1, ANAPC2, CDC27/APC3, ANAPC4, ANAPC5, CDC16/APC6, ANAPC7, CDC23/APC8, ANAPC10, ANAPC11, CDC26/APC12, ANAPC13, ANAPC15 and ANAPC16 that assemble into a complex of at least 19 chains with a combined molecular mass of around 1.2 MDa; APC/C interacts with FZR1 and FBXO5. Interacts with the cullin domain of ANAPC2. Interacts with UBE2D2. Auto-ubiquitinated.

Its subcellular location is the cytoplasm. It localises to the nucleus. It participates in protein modification; protein ubiquitination. Together with the cullin protein ANAPC2, constitutes the catalytic component of the anaphase promoting complex/cyclosome (APC/C), a cell cycle-regulated E3 ubiquitin ligase that controls progression through mitosis and the G1 phase of the cell cycle. The APC/C complex acts by mediating ubiquitination and subsequent degradation of target proteins: it mainly mediates the formation of 'Lys-11'-linked polyubiquitin chains and, to a lower extent, the formation of 'Lys-48'- and 'Lys-63'-linked polyubiquitin chains. The APC/C complex catalyzes assembly of branched 'Lys-11'-/'Lys-48'-linked branched ubiquitin chains on target proteins. May recruit the E2 ubiquitin-conjugating enzymes to the complex. This is Anaphase-promoting complex subunit 11 (Anapc11) from Mus musculus (Mouse).